The following is a 99-amino-acid chain: Large ribosomal subunit protein eL21 (99 aa).

The protein belongs to the eukaryotic ribosomal protein eL21 family.

The polypeptide is Large ribosomal subunit protein eL21 (Ignicoccus hospitalis (strain KIN4/I / DSM 18386 / JCM 14125)).